A 127-amino-acid polypeptide reads, in one-letter code: SH2 domain-containing protein 1A (127 aa).

In terms of domain architecture, SH2 spans 6–102; it reads VYHGKISRET…GIVIPLQYPV (97 aa). Positions 67–92 are interaction with FYN SH3 domain; sequence ETAPGVHKRYFRKIKNLISAFQKPDQ. Residue K89 is modified to N6-acetyllysine. A disordered region spans residues 104 to 127; that stretch reads KSSPRSTQGTTGIREDPDVCLKAP. Residues 116–127 show a composition bias toward basic and acidic residues; that stretch reads IREDPDVCLKAP.

Interacts with CD84, CD244, LY9, SLAMF1 and FYN. Interacts with NTRK1, NTRK2 and NTRK3.

It is found in the cytoplasm. Cytoplasmic adapter regulating receptors of the signaling lymphocytic activation molecule (SLAM) family such as SLAMF1, CD244, LY9, CD84, SLAMF6 and SLAMF7. In SLAM signaling seems to cooperate with SH2D1B/EAT-2. Initially it has been proposed that association with SLAMF1 prevents SLAMF1 binding to inhibitory effectors including INPP5D/SHIP1 and PTPN11/SHP-2. However, by simultaneous interactions, recruits FYN which subsequently phosphorylates and activates SLAMF1. Positively regulates CD244/2B4- and CD84-mediated natural killer (NK) cell functions. Can also promote CD48-, SLAMF6 -, LY9-, and SLAMF7-mediated NK cell activation. In the context of NK cell-mediated cytotoxicity enhances conjugate formation with target cells. May also regulate the activity of the neurotrophin receptors NTRK1, NTRK2 and NTRK3. The chain is SH2 domain-containing protein 1A (SH2D1A) from Saguinus oedipus (Cotton-top tamarin).